The following is a 991-amino-acid chain: MSSLALSQLLLAVTLPLLELEPTFVPTAQSELSPYGGKSGQQLNQYSGEGESVLVSSYVHLEFSSTAWPQELSKNFTLPTALAVLPPKTLTGLGLTTECRANHSGTSLCTCHPGYQWNATLCSLYPHCWGRRSERDSCMCRSFHGPVTGYCQLLPPVPANLILDSQLQMHGNTLNLILLKKEEATNLRWFLRHSKNHTPISLWPGTNVLQTSSEGQSGLRVARMSRHWAGEYESIFEAQGFRWRLRQLVKVPLQEEEVVRLPDALSISCTASTGFQLSCCIPLTTDYTATWSPGEDSQASLQKMSDSQCFVLAVPHCPATNTTYTCTLQSQNLPPLVAPVSITIIQDGDTTCPEDFSVVSWNVTKAGFVAQAPCPVNKKGVVKRLCGTDGIWRPVQNTCTEAKILTLCLKAKLLEGQGKPYEEVPWILSELQEQVGVASTPSDLWEMLHTVTLLAKVVAETSTELTGSALKDLLTTTDKILDANISALWTLAQAQEPSMGSDFLKAVETLVHSLRPQQHPFSFSSANVLLQSQLLRHSSPPGYQMSFSTWPLLQARIPWHSLAPLVHSGTNVSITSLVLQKLDYRLPSNYTQGLWNTPYTTPGLILVVSITADGQAFTQAEVIMDYEDMNGTLHCVFWDHRVFQGQGGWSDEGCEVHAANASITQCICQHLTAFSILMSQHTVPENPTLDLLSQVGTGASVLALLVCLAIYGLVWRVVVRNKVAFFRHTTLFNMVICLLVADTCFLGSPFLPSGYHSLICLVTAFLCHFFYLATFFWMLAQALVLAHQLLFVFHQLSKHVVLSLMVMLGYLCPLGFAGVTLGLYLPQRKYLWEGKCFLNGGGVMLYSFSEPVLAIVGVNGLVLVIAVLKLLRPSLSEGPTVEKRQALVGVLKALLILTPIFGLTWGLGVATLFDGSIVSHYAFSILNSLQGVFILVFGCLTDKKVLEALRKRLRGSRSSNSAISMVTNETYTSEHSKERSEPASYEERMTD.

A signal peptide spans 1–20; that stretch reads MSSLALSQLLLAVTLPLLEL. At 21-694 the chain is on the extracellular side; it reads EPTFVPTAQS…ENPTLDLLSQ (674 aa). Residues asparagine 75, asparagine 102, asparagine 118, asparagine 321, asparagine 362, asparagine 484, asparagine 571, asparagine 589, asparagine 630, and asparagine 660 are each glycosylated (N-linked (GlcNAc...) asparagine). A GAIN-B domain is found at 519 to 684; sequence HPFSFSSANV…SILMSQHTVP (166 aa). Cystine bridges form between cysteine 635/cysteine 666 and cysteine 654/cysteine 668. Residues 635–684 are GPS; the sequence is CVFWDHRVFQGQGGWSDEGCEVHAANASITQCICQHLTAFSILMSQHTVP. Residues 695 to 715 form a helical membrane-spanning segment; it reads VGTGASVLALLVCLAIYGLVW. Topologically, residues 716–730 are cytoplasmic; it reads RVVVRNKVAFFRHTT. The helical transmembrane segment at 731–751 threads the bilayer; the sequence is LFNMVICLLVADTCFLGSPFL. At 752–757 the chain is on the extracellular side; the sequence is PSGYHS. The chain crosses the membrane as a helical span at residues 758 to 778; that stretch reads LICLVTAFLCHFFYLATFFWM. Residues 779–799 are Cytoplasmic-facing; the sequence is LAQALVLAHQLLFVFHQLSKH. The helical transmembrane segment at 800–820 threads the bilayer; the sequence is VVLSLMVMLGYLCPLGFAGVT. Residues 821 to 850 lie on the Extracellular side of the membrane; sequence LGLYLPQRKYLWEGKCFLNGGGVMLYSFSE. A helical membrane pass occupies residues 851–871; the sequence is PVLAIVGVNGLVLVIAVLKLL. Residues 872 to 892 lie on the Cytoplasmic side of the membrane; that stretch reads RPSLSEGPTVEKRQALVGVLK. Residues 893 to 913 traverse the membrane as a helical segment; the sequence is ALLILTPIFGLTWGLGVATLF. Topologically, residues 914–916 are extracellular; sequence DGS. Residues 917-937 traverse the membrane as a helical segment; it reads IVSHYAFSILNSLQGVFILVF. The Cytoplasmic segment spans residues 938–991; that stretch reads GCLTDKKVLEALRKRLRGSRSSNSAISMVTNETYTSEHSKERSEPASYEERMTD. The interval 964-991 is disordered; the sequence is SMVTNETYTSEHSKERSEPASYEERMTD. A compositionally biased stretch (basic and acidic residues) spans 972–991; the sequence is TSEHSKERSEPASYEERMTD.

It belongs to the G-protein coupled receptor 2 family. Adhesion G-protein coupled receptor (ADGR) subfamily. As to quaternary structure, heterodimer of 2 chains generated by proteolytic processing; the large extracellular N-terminal fragment and the membrane-bound C-terminal fragment predominantly remain associated and non-covalently linked. Autoproteolytically processed at the GPS region of the GAIN-B domain; this cleavage modulates receptor activity. As to expression, expression is restricted to testis and circumvallate papillae.

The protein localises to the membrane. Its function is as follows. Orphan receptor. In Mus musculus (Mouse), this protein is Adhesion G-protein coupled receptor F3 (ADGRF3).